Reading from the N-terminus, the 216-residue chain is Adenylate kinase (216 aa).

10–15 is an ATP binding site; the sequence is GSGKGT. An NMP region spans residues 30–59; sequence STGDMLRAAVKEGTPMGVKAKAKMDAGALV. AMP-binding positions include Thr-31, Arg-36, 57-59, 85-88, and Gln-92; these read ALV and GFPR. An LID region spans residues 126–163; the sequence is GRRTCRDCGKMYHVEFDAPAVADKCDKCGGQLFQRDDD. Arg-127 contributes to the ATP binding site. The Zn(2+) site is built by Cys-130, Cys-133, Cys-150, and Cys-153. Positions 160 and 171 each coordinate AMP. Lys-199 lines the ATP pocket.

It belongs to the adenylate kinase family. Monomer.

It is found in the cytoplasm. The enzyme catalyses AMP + ATP = 2 ADP. It participates in purine metabolism; AMP biosynthesis via salvage pathway; AMP from ADP: step 1/1. Its function is as follows. Catalyzes the reversible transfer of the terminal phosphate group between ATP and AMP. Plays an important role in cellular energy homeostasis and in adenine nucleotide metabolism. The polypeptide is Adenylate kinase (Syntrophotalea carbinolica (strain DSM 2380 / NBRC 103641 / GraBd1) (Pelobacter carbinolicus)).